We begin with the raw amino-acid sequence, 401 residues long: 3-hydroxyisobutyryl-CoA hydrolase-like protein 1, mitochondrial (401 aa).

The N-terminal 26 residues, Met-1–Cys-26, are a transit peptide targeting the mitochondrion.

It belongs to the enoyl-CoA hydratase/isomerase family.

The protein resides in the mitochondrion. In Arabidopsis thaliana (Mouse-ear cress), this protein is 3-hydroxyisobutyryl-CoA hydrolase-like protein 1, mitochondrial.